The sequence spans 479 residues: Glutamate--tRNA ligase (479 aa).

The 'HIGH' region signature appears at 9–19 (PSPTGNLHIGT). Positions 243 to 247 (KLSKR) match the 'KMSKS' region motif. Residue K246 participates in ATP binding.

The protein belongs to the class-I aminoacyl-tRNA synthetase family. Glutamate--tRNA ligase type 1 subfamily. In terms of assembly, monomer.

Its subcellular location is the cytoplasm. It catalyses the reaction tRNA(Glu) + L-glutamate + ATP = L-glutamyl-tRNA(Glu) + AMP + diphosphate. Its function is as follows. Catalyzes the attachment of glutamate to tRNA(Glu) in a two-step reaction: glutamate is first activated by ATP to form Glu-AMP and then transferred to the acceptor end of tRNA(Glu). The sequence is that of Glutamate--tRNA ligase from Synechococcus sp. (strain JA-2-3B'a(2-13)) (Cyanobacteria bacterium Yellowstone B-Prime).